We begin with the raw amino-acid sequence, 25 residues long: Insulin mimetic protein (25 aa).

A disordered region spans residues 1 to 25 (TKDPELKQCKKQQKKQQQYDDDDKK).

In terms of processing, glycosylated. Expressed in seed.

The sequence is that of Insulin mimetic protein from Cnidoscolus quercifolius.